The sequence spans 728 residues: Catalase-peroxidase (728 aa).

Positions 91–218 form a cross-link, tryptophyl-tyrosyl-methioninium (Trp-Tyr) (with M-244); it reads WHSAGTYRTA…LAAVQMGLIY (128 aa). The active-site Proton acceptor is the His92. A cross-link (tryptophyl-tyrosyl-methioninium (Tyr-Met) (with W-91)) is located at residues 218–244; it reads YVNPEGPDGTPDPVAAAHDIRETFARM. His259 provides a ligand contact to heme b.

This sequence belongs to the peroxidase family. Peroxidase/catalase subfamily. Homodimer or homotetramer. Heme b is required as a cofactor. Post-translationally, formation of the three residue Trp-Tyr-Met cross-link is important for the catalase, but not the peroxidase activity of the enzyme.

It carries out the reaction H2O2 + AH2 = A + 2 H2O. It catalyses the reaction 2 H2O2 = O2 + 2 H2O. Bifunctional enzyme with both catalase and broad-spectrum peroxidase activity. This Burkholderia lata (strain ATCC 17760 / DSM 23089 / LMG 22485 / NCIMB 9086 / R18194 / 383) protein is Catalase-peroxidase.